The primary structure comprises 312 residues: Light-independent protochlorophyllide reductase iron-sulfur ATP-binding protein (312 aa).

ATP-binding positions include 55–60 (GIGKST) and lysine 84. Serine 59 provides a ligand contact to Mg(2+). [4Fe-4S] cluster-binding residues include cysteine 140 and cysteine 174. ATP-binding positions include 225 to 226 (NR) and 249 to 251 (PDL).

It belongs to the NifH/BchL/ChlL family. As to quaternary structure, homodimer. Protochlorophyllide reductase is composed of three subunits; BchL, BchN and BchB. [4Fe-4S] cluster serves as cofactor.

It carries out the reaction chlorophyllide a + oxidized 2[4Fe-4S]-[ferredoxin] + 2 ADP + 2 phosphate = protochlorophyllide a + reduced 2[4Fe-4S]-[ferredoxin] + 2 ATP + 2 H2O. The protein operates within porphyrin-containing compound metabolism; bacteriochlorophyll biosynthesis (light-independent). In terms of biological role, component of the dark-operative protochlorophyllide reductase (DPOR) that uses Mg-ATP and reduced ferredoxin to reduce ring D of protochlorophyllide (Pchlide) to form chlorophyllide a (Chlide). This reaction is light-independent. The L component serves as a unique electron donor to the NB-component of the complex, and binds Mg-ATP. The sequence is that of Light-independent protochlorophyllide reductase iron-sulfur ATP-binding protein from Rhodopseudomonas palustris (strain HaA2).